A 143-amino-acid chain; its full sequence is uncharacterized protein (143 aa).

Transmembrane regions (helical) follow at residues Leu7 to Val29, Phe52 to Leu74, Leu87 to Gly105, and Trp120 to Gly142.

It is found in the cell membrane. This is an uncharacterized protein from Aquifex aeolicus (strain VF5).